The chain runs to 670 residues: Solute carrier organic anion transporter family member 1A3 (670 aa).

Topologically, residues 1–20 (MGDLEKGAATHGAGCFAKIK) are cytoplasmic. Residues 21-40 (VFLMALTCAYVSKSLSGTFM) traverse the membrane as a helical segment. At 41–59 (SSMLTQIERQFGIPTAIVG) the chain is on the extracellular side. Residues 60–80 (FINGSFEIGNLLLIIFVSYFG) form a helical membrane-spanning segment. The Cytoplasmic portion of the chain corresponds to 81-86 (MKLHRP). Residues 87–111 (IVIGVGCAVMGLGCFIISLPHFLMG) form a helical membrane-spanning segment. The Extracellular segment spans residues 112-155 (RYEYETTILPTSNLSSNSFLCMENQTQTLNPAQDPAECVKEVKS). 2 N-linked (GlcNAc...) asparagine glycosylation sites follow: N124 and N135. Residues 156–184 (LMWIYVLVGNIIRGIGETPIMPLGVSYIE) form a helical membrane-spanning segment. The Cytoplasmic segment spans residues 185–203 (NFAKSENSPLYIGILETGK). The helical transmembrane segment at 204–224 (MIGPIFGLLLGSFCASIYVDT) threads the bilayer. Residues 225–242 (GSVNTDDLTITPTDIRWV) lie on the Extracellular side of the membrane. The helical transmembrane segment at 243–267 (GAWWIGFLVCAGVNILISIPFFFFP) threads the bilayer. At 268–311 (KTLPKEGLQENVDGTENAKEESTEKRPRKKNRGITKDFFPFLKS) the chain is on the cytoplasmic side. The segment at 277 to 296 (ENVDGTENAKEESTEKRPRK) is disordered. The segment covering 283-292 (ENAKEESTEK) has biased composition (basic and acidic residues). A helical transmembrane segment spans residues 312–333 (PVLQPDLHAVHPYKVLQVNAFN). At 334 to 353 (IYFSFLPKYLENQYGKSTAE) the chain is on the extracellular side. Residues 354–377 (VIFLMGVYNLPAICIGYLIAGFMM) traverse the membrane as a helical segment. The Cytoplasmic portion of the chain corresponds to 378 to 381 (KKFK). A helical transmembrane segment spans residues 382–405 (ITVKTAAFLAFCLSLSEYSFGFCN). At 406–513 (FLITCDNVPV…PECTNKLQYL (108 aa)) the chain is on the extracellular side. A Kazal-like domain is found at 433–488 (NNVLADCNTRCSCLTKTWDPVCGDNGLAYMSACLAGCEKSVGTGTNMVFHNCSCIQ). Disulfide bonds link C439–C469, C445–C465, and C454–C486. N-linked (GlcNAc...) asparagine glycans are attached at residues N483 and N492. The helical transmembrane segment at 514–536 (LILSGFLSILYSFAAIPGYMVFL) threads the bilayer. Residues 537 to 545 (RCIKSEEKS) are Cytoplasmic-facing. A helical membrane pass occupies residues 546-571 (LGIGIHAFCIRVFAGIPAPIYFGALI). Topologically, residues 572-605 (DRTCLHWGTQKCGAPGACRMYDINSFRRIYLGMS) are extracellular. A helical membrane pass occupies residues 606–623 (AALRGSSYLPAFVIVILT). Topologically, residues 624 to 670 (RKFSLPGKINSSEMEIAEMKLTEKESQCTDVHRNPKFKNDGELKTKL) are cytoplasmic.

This sequence belongs to the organo anion transporter (TC 2.A.60) family. In terms of tissue distribution, all isoforms are detected in kidney, and many are kidney specific. Isoforms 2 and 13 are also detected in liver. Isoforms 4 and 9/K4 are ubiquitous, but isoform 9/K13 is kidney specific. Isoforms 5 and 14 are detected in all tissues tested, with the exception of pancreas and spleen. Isoforms 11 and 15 are detected in kidney, pancreas and testis. Isoform 7 is detected in kidney, liver, testis and spleen.

The protein resides in the cell membrane. In terms of biological role, mediates the Na(+)-independent transport of organic anions such as methotrexate, taurocholate, folate and prostaglandin E2. May contribute to renal secretion and/or reabsorption of hydrophobic anionic compounds. Mediates renal clearance of methotrexate from the blood. The polypeptide is Solute carrier organic anion transporter family member 1A3 (Slco1a3) (Rattus norvegicus (Rat)).